The following is a 434-amino-acid chain: Methyl-coenzyme M reductase subunit beta (434 aa).

Tyr365 is a coenzyme M binding site. Position 367 (Gly367) interacts with coenzyme B.

It belongs to the methyl-coenzyme M reductase beta subunit family. MCR is a hexamer of two alpha, two beta, and two gamma chains, forming a dimer of heterotrimers. It depends on coenzyme F430 as a cofactor.

It localises to the cytoplasm. It carries out the reaction coenzyme B + methyl-coenzyme M = methane + coenzyme M-coenzyme B heterodisulfide. The protein operates within one-carbon metabolism; methyl-coenzyme M reduction; methane from methyl-coenzyme M: step 1/1. Functionally, component of the methyl-coenzyme M reductase (MCR) I that catalyzes the reductive cleavage of methyl-coenzyme M (CoM-S-CH3 or 2-(methylthio)ethanesulfonate) using coenzyme B (CoB or 7-mercaptoheptanoylthreonine phosphate) as reductant which results in the production of methane and the mixed heterodisulfide of CoB and CoM (CoM-S-S-CoB). This is the final step in methanogenesis. This chain is Methyl-coenzyme M reductase subunit beta (mcrB), found in Methanosarcina barkeri (strain Fusaro / DSM 804).